A 324-amino-acid chain; its full sequence is Dolichyl-phosphate beta-glucosyltransferase (324 aa).

Residues 1-7 (MATLLLQ) lie on the Lumenal side of the membrane. The helical transmembrane segment at 8-28 (LLGLGVALAAAALILVSIVAF) threads the bilayer. The Cytoplasmic portion of the chain corresponds to 29–324 (ITATKMPPCY…WRLKQTRKAS (296 aa)).

This sequence belongs to the glycosyltransferase 2 family.

It is found in the endoplasmic reticulum membrane. The enzyme catalyses a di-trans,poly-cis-dolichyl phosphate + UDP-alpha-D-glucose = a di-trans,poly-cis-dolichyl beta-D-glucosyl phosphate + UDP. It participates in protein modification; protein glycosylation. Functionally, dolichyl-phosphate beta-glucosyltransferase that operates in the biosynthetic pathway of dolichol-linked oligosaccharides, the glycan precursors employed in protein asparagine (N)-glycosylation. The assembly of dolichol-linked oligosaccharides begins on the cytosolic side of the endoplasmic reticulum membrane and finishes in its lumen. The sequential addition of sugars to dolichol pyrophosphate produces dolichol-linked oligosaccharides containing fourteen sugars, including two GlcNAcs, nine mannoses and three glucoses. Once assembled, the oligosaccharide is transferred from the lipid to nascent proteins by oligosaccharyltransferases. Dolichyl-phosphate beta-glucosyltransferase produces dolichyl beta-D-glucosyl phosphate/Dol-P-Glc, the glucose donor substrate used sequentially by ALG6, ALG8 and ALG10 to add glucose residues on top of the Man(9)GlcNAc(2)-PP-Dol structure. These are the three last steps in the biosynthetic pathway of dolichol-linked oligosaccharides to produce Glc(3)Man(9)GlcNAc(2)-PP-Dol. The enzyme is most probably active on the cytoplasmic side of the endoplasmic reticulum while its product Dol-P-Glc is the substrate for ALG6, ALG8 and ALG11 in the lumen of the endoplasmic reticulum. The polypeptide is Dolichyl-phosphate beta-glucosyltransferase (Mus musculus (Mouse)).